We begin with the raw amino-acid sequence, 815 residues long: Probable beta-glucosidase G (815 aa).

The first 20 residues, 1–20, serve as a signal peptide directing secretion; sequence MASIAHLVVSGLLAATAVNG. N-linked (GlcNAc...) asparagine glycosylation is found at N40, N58, N229, and N276. Residue D304 is part of the active site. N-linked (GlcNAc...) asparagine glycans are attached at residues N343, N350, N402, N507, N563, N584, N623, N662, and N715.

It belongs to the glycosyl hydrolase 3 family.

It localises to the secreted. It carries out the reaction Hydrolysis of terminal, non-reducing beta-D-glucosyl residues with release of beta-D-glucose.. It participates in glycan metabolism; cellulose degradation. Functionally, beta-glucosidases are one of a number of cellulolytic enzymes involved in the degradation of cellulosic biomass. Catalyzes the last step releasing glucose from the inhibitory cellobiose. This is Probable beta-glucosidase G (bglG) from Aspergillus flavus (strain ATCC 200026 / FGSC A1120 / IAM 13836 / NRRL 3357 / JCM 12722 / SRRC 167).